A 506-amino-acid chain; its full sequence is Galactose/methyl galactoside import ATP-binding protein MglA (506 aa).

2 consecutive ABC transporter domains span residues 14–249 (LEMK…VGRS) and 264–506 (VMLE…SLYL). Residue 46 to 53 (GENGAGKS) participates in ATP binding.

The protein belongs to the ABC transporter superfamily. Galactose/methyl galactoside importer (TC 3.A.1.2.3) family. The complex is composed of one ATP-binding protein (MglA), two transmembrane proteins (MglC) and a solute-binding protein (MglB).

The protein resides in the cell inner membrane. It carries out the reaction D-galactose(out) + ATP + H2O = D-galactose(in) + ADP + phosphate + H(+). The catalysed reaction is methyl beta-D-galactoside(out) + ATP + H2O = methyl beta-D-galactoside(in) + ADP + phosphate + H(+). In terms of biological role, part of the ABC transporter complex MglABC involved in galactose/methyl galactoside import. Responsible for energy coupling to the transport system. This Sodalis glossinidius (strain morsitans) protein is Galactose/methyl galactoside import ATP-binding protein MglA.